Here is a 558-residue protein sequence, read N- to C-terminus: MATMAILQRTFSFILIFSIALHLKSLFAMETDSGAELKYLELIHEANEFTPDEEYDYIVVGGGTAGCPLAATLSENYSVLVLERGGDQHSHPNIIRQENVANNALPADDENSPSQAFTSEDGVPGLVRGRVLGGSSMINFGFYSRGDDYFFKNTGIEWDMDSVKTAYEWVEETLVHRPDNVSTWESSVRDALLEVGVLPDNGNTLDHLVGTKVSGSTFDSTGNRHGAVELLNKANPNNLRVIVHATVDRIIFSSSESSGPSVVRVVYHDSHGKSYQVGIRENGEVILSAGAFGSPQLLLVSGVGPSQNLTSLEIPVVHDQPFVGQYMIDNPRINLALMLPFSVVDSGTPVVGITGKGSYIETTSSSTPFTSPVSPLYFPYPYPPVNISMGYFFGKVSNPTSAGSLWLKSPSDVAITPSVRFNYFSKPEDVHQCADAVATYEKILKTKAMEMYKFKDHGGEKYFQIVGRQIPENTSDFESMATYCRKTVTTFYHYCGGCTVNKVVDSNLKVVGIGGLRVVDNSVFTSSPGTNPQATTMMLGRYMGVKIQQERAGSDGDN.

The signal sequence occupies residues 1-28 (MATMAILQRTFSFILIFSIALHLKSLFA). 64-65 (TA) serves as a coordination point for FAD. The N-linked (GlcNAc...) asparagine glycan is linked to Asn-76. FAD-binding positions include 83–84 (ER), Val-131, Ser-135, and 139–142 (NFGF). Asn-180 carries N-linked (GlcNAc...) asparagine glycosylation. Val-247 lines the FAD pocket. N-linked (GlcNAc...) asparagine glycans are attached at residues Asn-308, Asn-386, and Asn-473. Cys-433 and Cys-484 are joined by a disulfide. 492 to 493 (YH) serves as a coordination point for FAD. The active-site Proton donor is His-493. Asn-531 acts as the Proton acceptor in catalysis. 532–533 (PQ) provides a ligand contact to FAD.

It belongs to the GMC oxidoreductase family. As to quaternary structure, monomer. It depends on FAD as a cofactor. Confined to nectaries.

It carries out the reaction (E)-sinapyl alcohol + O2 = (E)-sinapaldehyde + H2O2. It participates in alkaloid biosynthesis. Functionally, involved in the production of blood-red nectar containing the alkaloid nesocodin and that serves as a visual attractant for pollinator visitation, including vertebrates such as Phelsuma geckos. The nectar is initially acidic and pale yellow, but slowly becomes alkaline before turning into red within 24 hours. Together with NEC1 and NEC2, facilitates the condensation of sinapaldehyde ((E)-3,5-dimethoxy-4-hydroxycinnamaldehyde) and proline to form nesocodin, a pigment with a stable imine bond. Catalyzes the conversion of sinapyl alcohol to sinapaldehyde. This is Sinalpyl alcohol oxidase Nec3 from Nesocodon mauritianus (Blue Mauritius bellflower).